Here is a 293-residue protein sequence, read N- to C-terminus: uncharacterized protein (293 aa).

The active site involves aspartate 119.

The protein belongs to the pseudouridine synthase RluA family.

The catalysed reaction is a uridine in RNA = a pseudouridine in RNA. This is an uncharacterized protein from Helicobacter pylori (strain J99 / ATCC 700824) (Campylobacter pylori J99).